Reading from the N-terminus, the 92-residue chain is Small ribosomal subunit protein bS18 (92 aa).

A disordered region spans residues 1 to 28 (MTQQGNSGERKPRGKGPKRPRKPKVDPF). Residues 12–22 (PRGKGPKRPRK) show a composition bias toward basic residues.

It belongs to the bacterial ribosomal protein bS18 family. Part of the 30S ribosomal subunit. Forms a tight heterodimer with protein bS6.

Its function is as follows. Binds as a heterodimer with protein bS6 to the central domain of the 16S rRNA, where it helps stabilize the platform of the 30S subunit. This chain is Small ribosomal subunit protein bS18, found in Deinococcus radiodurans (strain ATCC 13939 / DSM 20539 / JCM 16871 / CCUG 27074 / LMG 4051 / NBRC 15346 / NCIMB 9279 / VKM B-1422 / R1).